Reading from the N-terminus, the 206-residue chain is Large ribosomal subunit protein uL4 (206 aa).

The tract at residues N44–G87 is disordered.

This sequence belongs to the universal ribosomal protein uL4 family. In terms of assembly, part of the 50S ribosomal subunit.

Its function is as follows. One of the primary rRNA binding proteins, this protein initially binds near the 5'-end of the 23S rRNA. It is important during the early stages of 50S assembly. It makes multiple contacts with different domains of the 23S rRNA in the assembled 50S subunit and ribosome. Forms part of the polypeptide exit tunnel. This Lachnospira eligens (strain ATCC 27750 / DSM 3376 / VPI C15-48 / C15-B4) (Eubacterium eligens) protein is Large ribosomal subunit protein uL4.